A 197-amino-acid chain; its full sequence is dITP/XTP pyrophosphatase (197 aa).

9–14 (TNNLNK) is a substrate binding site. Mg(2+) is bound by residues glutamate 42 and aspartate 71. The Proton acceptor role is filled by aspartate 71. Substrate-binding positions include serine 72, 153 to 156 (FGYD), lysine 176, and 181 to 182 (HR).

It belongs to the HAM1 NTPase family. As to quaternary structure, homodimer. Mg(2+) is required as a cofactor.

The catalysed reaction is XTP + H2O = XMP + diphosphate + H(+). The enzyme catalyses dITP + H2O = dIMP + diphosphate + H(+). It carries out the reaction ITP + H2O = IMP + diphosphate + H(+). Its function is as follows. Pyrophosphatase that catalyzes the hydrolysis of nucleoside triphosphates to their monophosphate derivatives, with a high preference for the non-canonical purine nucleotides XTP (xanthosine triphosphate), dITP (deoxyinosine triphosphate) and ITP. Seems to function as a house-cleaning enzyme that removes non-canonical purine nucleotides from the nucleotide pool, thus preventing their incorporation into DNA/RNA and avoiding chromosomal lesions. This chain is dITP/XTP pyrophosphatase, found in Leptospira interrogans serogroup Icterohaemorrhagiae serovar copenhageni (strain Fiocruz L1-130).